The chain runs to 1217 residues: Inactive disease resistance protein RPS4 (1217 aa).

Positions 14 to 175 (PQHQVFINFR…EIVKAVKTAL (162 aa)) constitute a TIR domain. Glu-88 is a catalytic residue. One can recognise an NB-ARC domain in the interval 211–472 (EQRLKDLEEK…FRSQDKDYVE (262 aa)). LRR repeat units lie at residues 260 to 285 (HALI…LLGE), 436 to 459 (PNIV…AFLD), 614 to 636 (LKEV…DFNP), 637 to 659 (INLV…DKDT), 682 to 706 (AEKL…MKKM), 708 to 728 (MLAF…EMNL), 729 to 749 (ISLK…PLIS), 750 to 774 (DNIE…KLQR), 796 to 818 (LKAL…EIDI), 819 to 842 (SFLN…SVQY), and 861 to 887 (LSQL…NLQC). The tract at residues 1162–1195 (TEGVDGRVKKKKKTRMDNGRPKKKQRSGRDDNQT) is disordered. Positions 1170-1177 (KKKKKTRM) match the Nuclear localization signal motif.

Interacts with EDS1.

Its subcellular location is the nucleus. The enzyme catalyses NAD(+) + H2O = ADP-D-ribose + nicotinamide + H(+). This Arabidopsis thaliana (Mouse-ear cress) protein is Inactive disease resistance protein RPS4 (RPS4).